The following is an 896-amino-acid chain: Translation initiation factor IF-2 (896 aa).

Disordered stretches follow at residues 53-81 (HGGE…SASK) and 117-301 (AEEA…ESMD). Residues 60-79 (TKMTLQRKSVSTLSVGSGSA) show a composition bias toward polar residues. Residues 117–227 (AEEAASKAKA…ESEKTGDHHV (111 aa)) show a composition bias toward basic and acidic residues. A compositionally biased stretch (low complexity) spans 254-266 (ATPAPAAAPANTG). A compositionally biased stretch (basic and acidic residues) spans 273–282 (GKDNRRDSRN). Residues 283–294 (ARGGRNARNNRS) show a composition bias toward low complexity. Positions 394-563 (SRAPVVTIMG…LLEAEVLELK (170 aa)) constitute a tr-type G domain. Positions 403-410 (GHVDHGKT) are G1. Residue 403–410 (GHVDHGKT) participates in GTP binding. The tract at residues 428 to 432 (GITQH) is G2. The segment at 449–452 (DTPG) is G3. Residues 449–453 (DTPGH) and 503–506 (NKID) each bind GTP. The interval 503–506 (NKID) is G4. The G5 stretch occupies residues 539–541 (SAK).

The protein belongs to the TRAFAC class translation factor GTPase superfamily. Classic translation factor GTPase family. IF-2 subfamily.

It is found in the cytoplasm. Functionally, one of the essential components for the initiation of protein synthesis. Protects formylmethionyl-tRNA from spontaneous hydrolysis and promotes its binding to the 30S ribosomal subunits. Also involved in the hydrolysis of GTP during the formation of the 70S ribosomal complex. The polypeptide is Translation initiation factor IF-2 (Shewanella sediminis (strain HAW-EB3)).